Here is a 555-residue protein sequence, read N- to C-terminus: CTP synthase (555 aa).

The tract at residues 1–265 (MTRYIFITGG…GNRVCEKLNI (265 aa)) is amidoligase domain. CTP is bound at residue S13. S13 contributes to the UTP binding site. Residues 14–19 (SLGKGI) and D71 each bind ATP. D71 and E139 together coordinate Mg(2+). CTP-binding positions include 146 to 148 (DIE), 186 to 191 (KTKPTQ), and K222. Residues 186-191 (KTKPTQ) and K222 contribute to the UTP site. The Glutamine amidotransferase type-1 domain maps to 290-541 (TVAVVGKYVD…IKAGLAAKEA (252 aa)). Residue G351 participates in L-glutamine binding. C378 functions as the Nucleophile; for glutamine hydrolysis in the catalytic mechanism. Residues 379 to 382 (LGMQ), E402, and R469 each bind L-glutamine. Residues H514 and E516 contribute to the active site.

This sequence belongs to the CTP synthase family. Homotetramer.

The enzyme catalyses UTP + L-glutamine + ATP + H2O = CTP + L-glutamate + ADP + phosphate + 2 H(+). It carries out the reaction L-glutamine + H2O = L-glutamate + NH4(+). The catalysed reaction is UTP + NH4(+) + ATP = CTP + ADP + phosphate + 2 H(+). It participates in pyrimidine metabolism; CTP biosynthesis via de novo pathway; CTP from UDP: step 2/2. Allosterically activated by GTP, when glutamine is the substrate; GTP has no effect on the reaction when ammonia is the substrate. The allosteric effector GTP functions by stabilizing the protein conformation that binds the tetrahedral intermediate(s) formed during glutamine hydrolysis. Inhibited by the product CTP, via allosteric rather than competitive inhibition. Catalyzes the ATP-dependent amination of UTP to CTP with either L-glutamine or ammonia as the source of nitrogen. Regulates intracellular CTP levels through interactions with the four ribonucleotide triphosphates. In Coxiella burnetii (strain Dugway 5J108-111), this protein is CTP synthase.